A 323-amino-acid chain; its full sequence is Acetyl-coenzyme A carboxylase carboxyl transferase subunit alpha 1 (323 aa).

The CoA carboxyltransferase C-terminal domain maps to 39–293 (RLSKKSQQLT…RRALGDSLRQ (255 aa)).

The protein belongs to the AccA family. In terms of assembly, acetyl-CoA carboxylase is a heterohexamer composed of biotin carboxyl carrier protein (AccB), biotin carboxylase (AccC) and two subunits each of ACCase subunit alpha (AccA) and ACCase subunit beta (AccD).

It localises to the cytoplasm. It carries out the reaction N(6)-carboxybiotinyl-L-lysyl-[protein] + acetyl-CoA = N(6)-biotinyl-L-lysyl-[protein] + malonyl-CoA. It functions in the pathway lipid metabolism; malonyl-CoA biosynthesis; malonyl-CoA from acetyl-CoA: step 1/1. Its function is as follows. Component of the acetyl coenzyme A carboxylase (ACC) complex. First, biotin carboxylase catalyzes the carboxylation of biotin on its carrier protein (BCCP) and then the CO(2) group is transferred by the carboxyltransferase to acetyl-CoA to form malonyl-CoA. Does not confer resistance to the endogenous polyketide antibiotic thailandamide, does not confer resistance to thailandamide when expressed in S.typhimurium. This Burkholderia thailandensis (strain ATCC 700388 / DSM 13276 / CCUG 48851 / CIP 106301 / E264) protein is Acetyl-coenzyme A carboxylase carboxyl transferase subunit alpha 1.